The following is a 144-amino-acid chain: Intraflagellar transport protein 25 homolog (144 aa).

Asn29, Asp32, and Thr37 together coordinate Ca(2+).

This sequence belongs to the IFT25 family. Component of the IFT complex B, at least composed of IFT20, IFT22, IFT25, IFT27, IFT46, IFT52, TRAF3IP1/IFT54, IFT57, IFT74, IFT80, IFT81, and IFT88. Interacts with IFT27. Interacts with IFT88. As to expression, detected in placenta.

The protein localises to the cell projection. Its subcellular location is the cilium. Component of the IFT complex B required for sonic hedgehog/SHH signaling. May mediate transport of SHH components: required for the export of SMO and PTCH1 receptors out of the cilium and the accumulation of GLI2 at the ciliary tip in response to activation of the SHH pathway, suggesting it is involved in the dynamic transport of SHH signaling molecules within the cilium. Not required for ciliary assembly. Its role in intraflagellar transport is mainly seen in tissues rich in ciliated cells such as kidney and testis. Essential for male fertility, spermiogenesis and sperm flagella formation. Plays a role in the early development of the kidney. May be involved in the regulation of ureteric bud initiation. This Homo sapiens (Human) protein is Intraflagellar transport protein 25 homolog.